A 96-amino-acid chain; its full sequence is Small ribosomal subunit protein bS6 (96 aa).

It belongs to the bacterial ribosomal protein bS6 family.

Functionally, binds together with bS18 to 16S ribosomal RNA. This Heliobacterium modesticaldum (strain ATCC 51547 / Ice1) protein is Small ribosomal subunit protein bS6.